Here is a 1172-residue protein sequence, read N- to C-terminus: WD repeat-containing protein 48 homolog (1172 aa).

Positions 1 to 115 are disordered; sequence MYEYYSTGKI…HSYGGGGGGT (115 aa). A compositionally biased stretch (polar residues) spans 13–36; sequence LPQQVDSNGINSKPMNSSPSTPIP. Over residues 37 to 63 the composition is skewed to low complexity; sequence NNNNNNNNNNNNNNNNNNNNNNNNNNN. Residues 64 to 89 show a composition bias toward polar residues; that stretch reads RNKSQQSFYLNNNNRNCGFSSPTKPQ. Low complexity predominate over residues 90–107; sequence YNNNNNNNNNNNSNYNHS. 7 WD repeats span residues 152 to 202, 208 to 246, 249 to 548, 560 to 599, 602 to 641, 645 to 683, and 686 to 727; these read RHCF…GFKF, DHTDWVNDLFFNDSNILVSCSSDSTIKIWNTDSERCVNS, FHDD…SPMF, GEGISIYSLAIAQDASFVVSGSTERAIRGWDVRSGQKIFK, GHTDNIRSILLNDNSTRCLSASSDGTVRLWDIGEQRCIQV, LHTDSVWTLATNDSFSHFFSGGRDGMIFLTDLKTHQSRL, and RENE…NQSI. The span at 341–365 shows a compositional bias: low complexity; it reads ISTNNNNNNSSSSNNNNNNNNNNNN. Residues 341 to 544 are disordered; the sequence is ISTNNNNNNS…NDNNNLNKKF (204 aa). 3 stretches are compositionally biased toward polar residues: residues 366–377, 388–408, and 417–434; these read GQTNTHENTAET, QLSSVNKNGIRSNLSNNNFRN, and PPSSVLNHTPKILSSNGR. Positions 435 to 485 are enriched in low complexity; that stretch reads NVNNRENNNNNNNNNNNNNNNNNNNNNNNNNNNNNNNNNINNNNHENNGNV. The span at 486 to 503 shows a compositional bias: acidic residues; it reads DVDDEDDDDDDDDDDDDD. Residues 504–513 show a composition bias toward basic and acidic residues; the sequence is CNKNKKKYDD. A compositionally biased stretch (low complexity) spans 514–543; it reads NNNNNNYNNNNNKKNNSNDNNNDNNNLNKK. Low complexity predominate over residues 745–769; the sequence is NNNNNNNNNNNNNNNNNNNNNNNNN. The disordered stretch occupies residues 745–775; it reads NNNNNNNNNNNNNNNNNNNNNNNNNNREKLS. The WD 8 repeat unit spans residues 794–833; the sequence is QGRAGIIKNQVLNNRRQVLTKDNDNNVQLWDITKGKEIES. Residues 926–986 form a disordered region; it reads ELNHSNDSVN…TNSTTPNSGR (61 aa). A compositionally biased stretch (low complexity) spans 930 to 984; it reads SNDSVNSSLSSNTSGDNNNNNYNNYNNYNNNNNNGLQKSSSSSSIVSTNSTTPNS.

Belongs to the WD repeat WDR48 family.

The chain is WD repeat-containing protein 48 homolog from Dictyostelium discoideum (Social amoeba).